The following is a 1040-amino-acid chain: Multidrug resistance protein MdtB (1040 aa).

12 helical membrane passes run 16–36 (FIMR…AGII), 347–367 (LMMA…NIPA), 369–389 (IIPG…MVFL), 396–416 (LTLM…IVVI), 440–460 (IGFT…PLLF), 472–492 (FAIT…TLTP), 537–557 (WLTL…WVFI), 863–883 (LGST…VLGI), 888–908 (FIHP…ALLA), 911–931 (IAGS…IGIV), 968–988 (ILMT…STGV), and 998–1018 (IGMV…TPVI).

It belongs to the resistance-nodulation-cell division (RND) (TC 2.A.6) family. MdtB subfamily. Part of a tripartite efflux system composed of MdtA, MdtB and MdtC. MdtB forms a heteromultimer with MdtC.

It is found in the cell inner membrane. The MdtABC tripartite complex confers resistance against novobiocin and deoxycholate. The polypeptide is Multidrug resistance protein MdtB (Escherichia coli O45:K1 (strain S88 / ExPEC)).